A 634-amino-acid polypeptide reads, in one-letter code: Leucine--tRNA ligase subunit alpha (634 aa).

Positions 43–51 match the 'HIGH' region motif; it reads PSGRIHMGH.

The protein belongs to the class-I aminoacyl-tRNA synthetase family. In terms of assembly, seems to consist of an alpha chain and a beta chain.

It is found in the cytoplasm. It carries out the reaction tRNA(Leu) + L-leucine + ATP = L-leucyl-tRNA(Leu) + AMP + diphosphate. This chain is Leucine--tRNA ligase subunit alpha (leuS), found in Aquifex aeolicus (strain VF5).